A 412-amino-acid polypeptide reads, in one-letter code: Adenosine receptor A2a (412 aa).

Residues 1-7 (MPIMGSS) lie on the Extracellular side of the membrane. Residues 8–32 (VYITVELAIAVLAILGNVLVCWAVW) form a helical membrane-spanning segment. The Cytoplasmic segment spans residues 33–42 (LNSNLQNVTN). Residues 43 to 66 (YFVVSLAAADIAVGVLAIPFAITI) form a helical membrane-spanning segment. The Extracellular portion of the chain corresponds to 67–77 (STGFCAACHGC). Cystine bridges form between cysteine 71/cysteine 159, cysteine 74/cysteine 146, and cysteine 77/cysteine 166. A helical transmembrane segment spans residues 78–100 (LFIACFVLVLTQSSIFSLLAIAI). Over 101-120 (DRYIAIRIPLRYNGLVTGTR) the chain is Cytoplasmic. The helical transmembrane segment at 121–143 (AKGIIAICWVLSFAIGLTPMLGW) threads the bilayer. Residues 144-173 (NNCGQPKEGKNHSQGCGEGQVACLFEDVVP) lie on the Extracellular side of the membrane. Residue asparagine 154 is glycosylated (N-linked (GlcNAc...) asparagine). Residue glutamate 169 coordinates adenosine. Residues 174–198 (MNYMVYFNFFACVLVPLLLMLGVYL) form a helical membrane-spanning segment. Over 199-234 (RIFLAARRQLKQMESQPLPGERARSTLQKEVHAAKS) the chain is Cytoplasmic. Residues 235 to 258 (LAIIVGLFALCWLPLHIINCFTFF) form a helical membrane-spanning segment. Residue asparagine 253 coordinates adenosine. Cysteine 259 and cysteine 262 are oxidised to a cystine. At 259–266 (CPDCSHAP) the chain is on the extracellular side. The chain crosses the membrane as a helical span at residues 267 to 290 (LWLMYLAIVLSHTNSVVNPFIYAY). Adenosine-binding residues include serine 277 and histidine 278. Residues 291 to 412 (RIREFRQTFR…PLAQDGAGVS (122 aa)) are Cytoplasmic-facing. Positions 391–412 (KGVCPEPPGLDDPLAQDGAGVS) are disordered.

It belongs to the G-protein coupled receptor 1 family. As to quaternary structure, interacts (via cytoplasmic C-terminal domain) with USP4; the interaction is direct. May interact with DRD4. Interacts with NECAB2. Interacts (via cytoplasmic C-terminal domain) with GAS2L2; interaction enhances receptor-mediated adenylyl cyclase activity. Post-translationally, ubiquitinated. Deubiquitinated by USP4; leading to stabilization and expression at the cell surface.

The protein localises to the cell membrane. Its function is as follows. Receptor for adenosine. The activity of this receptor is mediated by G proteins which activate adenylyl cyclase. The chain is Adenosine receptor A2a (ADORA2A) from Homo sapiens (Human).